The sequence spans 119 residues: EF-hand calcium-binding domain-containing protein 2 (119 aa).

The N-terminal stretch at 1 to 22 (MKVAVVLIVVLVVMMIGQETDS) is a signal peptide. An EF-hand domain is found at 82–117 (VDDNGFVEFKATYDVDGDGVVQVEEYETVVELTENL). Ca(2+) is bound by residues aspartate 95, aspartate 97, aspartate 99, and glutamate 106.

As to expression, component of the acid-soluble organic matrix of calcified layers of the shell (at protein level).

It is found in the secreted. This Lottia gigantea (Giant owl limpet) protein is EF-hand calcium-binding domain-containing protein 2.